Here is a 425-residue protein sequence, read N- to C-terminus: 2-oxoglutarate and iron-dependent oxygenase JMJD4 homolog (425 aa).

The JmjC domain maps to 165 to 316 (AAQMPGYNFY…MVWQNLKNNL (152 aa)). The Fe cation site is built by H212, D214, and H284.

Belongs to the JMJD6 family. Fe(2+) serves as cofactor.

Its subcellular location is the nucleus. It localises to the cytoplasm. The catalysed reaction is L-lysyl-[protein] + 2-oxoglutarate + O2 = 4-hydroxy-L-lysyl-[protein] + succinate + CO2. Its function is as follows. Catalyzes the 2-oxoglutarate and iron-dependent C4-lysyl hydroxylation of eRF1 thereby promoting the translational termination efficiency of eRF1. May be involved in regulation of chromatin structure, promoting expansion of heterochromatin. The protein is 2-oxoglutarate and iron-dependent oxygenase JMJD4 homolog of Drosophila melanogaster (Fruit fly).